Here is a 391-residue protein sequence, read N- to C-terminus: Multidrug resistance protein MdtL (391 aa).

12 consecutive transmembrane segments (helical) span residues 4–24 (FLICSFALVLLYPAGIDMYLV), 42–62 (IAFSVYLAGMAAAMLFAGKVA), 69–89 (PVAIPGAALFIIASVFCSLAE), 93–113 (LFLAGRFLQGLGAGCCYVVAF), 131–151 (LLNGITCIIPVLAPVLGHLIM), 158–178 (SLFWAMAMMGIAVLMLSLFIL), 203–222 (FFLSRVVITTLSVSVILTFV), 245–265 (ALTAGVSMTVSFSTPFALGIF), 269–289 (TLMITSQVLFLAAGITLAVSP), 293–313 (VSLFGITLICAGFSVGFGVAM), 331–351 (LGIAQVCGSSLWIWLAAVVGI), and 356–376 (MLIGILIACSIVSLLLIMFVA).

It belongs to the major facilitator superfamily. DHA1 family. MdtL (TC 2.A.1.2.22) subfamily.

It localises to the cell inner membrane. Confers resistance to chloramphenicol. In Escherichia coli O9:H4 (strain HS), this protein is Multidrug resistance protein MdtL.